The following is a 198-amino-acid chain: Outer-membrane lipoprotein carrier protein (198 aa).

An N-terminal signal peptide occupies residues 1–17 (MKKFLFSLCLLSSTVLA).

Belongs to the LolA family. As to quaternary structure, monomer.

The protein resides in the periplasm. Its function is as follows. Participates in the translocation of lipoproteins from the inner membrane to the outer membrane. Only forms a complex with a lipoprotein if the residue after the N-terminal Cys is not an aspartate (The Asp acts as a targeting signal to indicate that the lipoprotein should stay in the inner membrane). This is Outer-membrane lipoprotein carrier protein from Aliivibrio fischeri (strain MJ11) (Vibrio fischeri).